A 376-amino-acid polypeptide reads, in one-letter code: Phospho-N-acetylmuramoyl-pentapeptide-transferase (376 aa).

Transmembrane regions (helical) follow at residues 28-48 (RTIMATITAMVLTFVLAPWFI), 76-96 (TMGGALILLSLLLPTVLWADL), 100-120 (FVLATTAVTAGYGVIGYLDDF), 135-155 (YKLIGQVLIGGAAVAYTFLLA), 179-199 (YPIELPLYVYIPFAVFVVVAT), 211-231 (GLAIGPVIINAGTYLILAYIV), 252-272 (AGELSVYCGSVIGAGIGFLWY), 279-299 (VFMGDVGSLALGGGLGMLAVF), 307-327 (IILGGIFFIETVSVITQVLSF), and 353-373 (KIIVRFWIISILLALVSLASM).

The protein belongs to the glycosyltransferase 4 family. MraY subfamily. Mg(2+) serves as cofactor.

It is found in the cell inner membrane. It carries out the reaction UDP-N-acetyl-alpha-D-muramoyl-L-alanyl-gamma-D-glutamyl-meso-2,6-diaminopimeloyl-D-alanyl-D-alanine + di-trans,octa-cis-undecaprenyl phosphate = di-trans,octa-cis-undecaprenyl diphospho-N-acetyl-alpha-D-muramoyl-L-alanyl-D-glutamyl-meso-2,6-diaminopimeloyl-D-alanyl-D-alanine + UMP. It functions in the pathway cell wall biogenesis; peptidoglycan biosynthesis. In terms of biological role, catalyzes the initial step of the lipid cycle reactions in the biosynthesis of the cell wall peptidoglycan: transfers peptidoglycan precursor phospho-MurNAc-pentapeptide from UDP-MurNAc-pentapeptide onto the lipid carrier undecaprenyl phosphate, yielding undecaprenyl-pyrophosphoryl-MurNAc-pentapeptide, known as lipid I. This chain is Phospho-N-acetylmuramoyl-pentapeptide-transferase, found in Sorangium cellulosum (strain So ce56) (Polyangium cellulosum (strain So ce56)).